Here is a 431-residue protein sequence, read N- to C-terminus: Histidine--tRNA ligase (431 aa).

Belongs to the class-II aminoacyl-tRNA synthetase family. In terms of assembly, homodimer.

It localises to the cytoplasm. It catalyses the reaction tRNA(His) + L-histidine + ATP = L-histidyl-tRNA(His) + AMP + diphosphate + H(+). The chain is Histidine--tRNA ligase from Neisseria meningitidis serogroup C / serotype 2a (strain ATCC 700532 / DSM 15464 / FAM18).